A 135-amino-acid chain; its full sequence is Meiotically up-regulated gene 116 protein (135 aa).

A helical membrane pass occupies residues 20 to 39; sequence YFHSFHCFFLLCFTVMLCVV. The tract at residues 81–101 is disordered; that stretch reads QTPTKKGNKTKKKRKKEKKKE. A compositionally biased stretch (basic residues) spans 86–98; sequence KGNKTKKKRKKEK.

It is found in the mitochondrion membrane. In terms of biological role, has a role in meiosis. The protein is Meiotically up-regulated gene 116 protein (mug116) of Schizosaccharomyces pombe (strain 972 / ATCC 24843) (Fission yeast).